Reading from the N-terminus, the 897-residue chain is Staphylococcal nuclease domain-containing protein 1 (897 aa).

TNase-like domains are found at residues 18–167, 194–329, 342–499, and 528–663; these read QLQR…LWSE, KPVN…IWKD, RQFV…LHSK, and GRSE…LWAN. The Tudor domain occupies 732–790; the sequence is APRRGEFCIAKFADGEWYRARVEKVESPAKVHVFYIDYGNREVLSSTRLAALPPAFSTR.

The protein resides in the cytoplasm. The polypeptide is Staphylococcal nuclease domain-containing protein 1 (snd1) (Danio rerio (Zebrafish)).